An 855-amino-acid chain; its full sequence is Circadian locomoter output cycles protein kaput (855 aa).

The short motif at aspartate 32–arginine 47 is the Nuclear localization signal element. The region spanning alanine 34–histidine 84 is the bHLH domain. 2 positions are modified to phosphoserine: serine 38 and serine 42. Lysine 67 participates in a covalent cross-link: Glycyl lysine isopeptide (Lys-Gly) (interchain with G-Cter in SUMO1). PAS domains are found at residues asparagine 107–serine 177 and phenylalanine 262–glycine 332. A PAC domain is found at serine 336 to alanine 379. The segment at cysteine 371–proline 854 is interaction with NR3C1. Disordered stretches follow at residues glutamate 392–arginine 411 and alanine 420–proline 497. A Phosphoserine modification is found at serine 408. The residue at position 427 (serine 427) is a Phosphoserine; by GSK3-beta. Position 431 is a phosphoserine (serine 431). Residues aspartate 447–proline 463 show a composition bias toward polar residues. An interaction with SIRT1 region spans residues serine 450 to serine 570. Threonine 451 and threonine 461 each carry phosphothreonine; by CDK5. Residues serine 478–serine 493 show a composition bias toward low complexity. The interval phenylalanine 514–glutamine 564 is implicated in the circadian rhythmicity. 3 disordered regions span residues threonine 613–proline 650, glutamine 752–proline 791, and alanine 814–glutamine 855. Residues glutamine 619 to proline 650 are compositionally biased toward low complexity. Low complexity predominate over residues glutamine 818–glutamine 837. Over residues leucine 846–glutamine 855 the composition is skewed to polar residues. Lysine 851 participates in a covalent cross-link: Glycyl lysine isopeptide (Lys-Gly) (interchain with G-Cter in SUMO1).

Component of the circadian clock oscillator which includes the CRY proteins, CLOCK or NPAS2, BMAL1 or BMAL2, CSNK1D and/or CSNK1E, TIMELESS and the PER proteins. Forms a heterodimer with BMAL1. The CLOCK-BMAL1 heterodimer is required for E-box-dependent transactivation, for CLOCK nuclear translocation and degradation, and for phosphorylation of both CLOCK and BMAL1. Interacts with NR3C1 in a ligand-dependent fashion. Interacts with ESR1 and estrogen stimulates this interaction. Interacts with the complex p35/CDK5. Interacts with RELA/p65. Interacts with KAT2B, CREBBP and EP300. Interacts with ID1 and ID3. Interacts with ID2. Interacts with MTA1. Interacts with OGA. Interacts with SIRT1. Interacts with CIPC. Interacts with EZH2. Interacts with EIF4E, PIWIL1 and DDX4. Interacts with PER1, PER2, CRY1 and CRY2 and this interaction requires a translocation to the nucleus. Interaction of the CLOCK-BMAL1 heterodimer with PER or CRY inhibits transcription activation. Interaction of the CLOCK-BMAL1 with CRY1 is independent of DNA but with PER2 is off DNA. The CLOCK-BMAL1 heterodimer interacts with GSK3B. Interacts with KDM5A. Interacts with KMT2A; in a circadian manner. Interacts with MYBBP1A. Interacts with THRAP3. Interacts with MED1; this interaction requires the presence of THRAP3. Interacts with NCOA2. The CLOCK-BMAL1 heterodimer interacts with PASD1. Interacts with NDUFA9. Interacts with IMPDH2; in a circadian manner. Interacts with ASS1; in a circadian manner. Interacts with PIWIL2 (via PIWI domain). Interacts with HNF4A. Post-translationally, ubiquitinated, leading to its proteasomal degradation. O-glycosylated; contains O-GlcNAc. O-glycosylation by OGT prevents protein degradation by inhibiting ubiquitination. It also stabilizes the CLOCK-BMAL1 heterodimer thereby increasing CLOCK-BMAL1-mediated transcriptional activation of PER1/2/3 and CRY1/2. In terms of processing, phosphorylation is dependent on the CLOCK-BMAL1 heterodimer formation. Phosphorylation enhances the transcriptional activity, alters the subcellular localization and decreases the stability of the heterodimer by promoting its degradation. Phosphorylation shows circadian variations in the liver: the hyperphosphorylated form peaks at midnight (CT18), while the hypophosphorylated form is abundant throughout the day. May be phosphorylated by CSNK1D and CKSN1E. Post-translationally, sumoylation enhances its transcriptional activity and interaction with ESR1, resulting in up-regulation of ESR1 activity. Estrogen stimulates sumoylation. Desumoylation by SENP1 negatively regulates its transcriptional activity. Undergoes lysosome-mediated degradation in a time-dependent manner in the liver. Expressed equally in brain, eye, testes, ovaries, liver, heart, lung, kidney. In the brain, expression is abundant in the suprachiasmatic nuclei (SCN), in the pyriform cortex, and in the hippocampus. Low expression throughout the rest of the brain. Expression does not appear to undergo circadian oscillations.

Its subcellular location is the nucleus. It is found in the cytoplasm. The protein localises to the cytosol. It catalyses the reaction L-lysyl-[protein] + acetyl-CoA = N(6)-acetyl-L-lysyl-[protein] + CoA + H(+). Transcriptional activator which forms a core component of the circadian clock. The circadian clock, an internal time-keeping system, regulates various physiological processes through the generation of approximately 24 hour circadian rhythms in gene expression, which are translated into rhythms in metabolism and behavior. It is derived from the Latin roots 'circa' (about) and 'diem' (day) and acts as an important regulator of a wide array of physiological functions including metabolism, sleep, body temperature, blood pressure, endocrine, immune, cardiovascular, and renal function. Consists of two major components: the central clock, residing in the suprachiasmatic nucleus (SCN) of the brain, and the peripheral clocks that are present in nearly every tissue and organ system. Both the central and peripheral clocks can be reset by environmental cues, also known as Zeitgebers (German for 'timegivers'). The predominant Zeitgeber for the central clock is light, which is sensed by retina and signals directly to the SCN. The central clock entrains the peripheral clocks through neuronal and hormonal signals, body temperature and feeding-related cues, aligning all clocks with the external light/dark cycle. Circadian rhythms allow an organism to achieve temporal homeostasis with its environment at the molecular level by regulating gene expression to create a peak of protein expression once every 24 hours to control when a particular physiological process is most active with respect to the solar day. Transcription and translation of core clock components (CLOCK, NPAS2, BMAL1, BMAL2, PER1, PER2, PER3, CRY1 and CRY2) plays a critical role in rhythm generation, whereas delays imposed by post-translational modifications (PTMs) are important for determining the period (tau) of the rhythms (tau refers to the period of a rhythm and is the length, in time, of one complete cycle). A diurnal rhythm is synchronized with the day/night cycle, while the ultradian and infradian rhythms have a period shorter and longer than 24 hours, respectively. Disruptions in the circadian rhythms contribute to the pathology of cardiovascular diseases, cancer, metabolic syndromes and aging. A transcription/translation feedback loop (TTFL) forms the core of the molecular circadian clock mechanism. Transcription factors, CLOCK or NPAS2 and BMAL1 or BMAL2, form the positive limb of the feedback loop, act in the form of a heterodimer and activate the transcription of core clock genes and clock-controlled genes (involved in key metabolic processes), harboring E-box elements (5'-CACGTG-3') within their promoters. The core clock genes: PER1/2/3 and CRY1/2 which are transcriptional repressors form the negative limb of the feedback loop and interact with the CLOCK|NPAS2-BMAL1|BMAL2 heterodimer inhibiting its activity and thereby negatively regulating their own expression. This heterodimer also activates nuclear receptors NR1D1/2 and RORA/B/G, which form a second feedback loop and which activate and repress BMAL1 transcription, respectively. Regulates the circadian expression of ICAM1, VCAM1, CCL2, THPO and MPL and also acts as an enhancer of the transactivation potential of NF-kappaB. Plays an important role in the homeostatic regulation of sleep. The CLOCK-BMAL1 heterodimer regulates the circadian expression of SERPINE1/PAI1, VWF, B3, CCRN4L/NOC, NAMPT, DBP, MYOD1, PPARGC1A, PPARGC1B, SIRT1, GYS2, F7, NGFR, GNRHR, BHLHE40/DEC1, ATF4, MTA1, KLF10 and also genes implicated in glucose and lipid metabolism. Promotes rhythmic chromatin opening, regulating the DNA accessibility of other transcription factors. May play a role in spermatogenesis; contributes to the chromatoid body assembly and physiology. The CLOCK-BMAL2 heterodimer activates the transcription of SERPINE1/PAI1 and BHLHE40/DEC1. The preferred binding motif for the CLOCK-BMAL1 heterodimer is 5'-CACGTGA-3', which contains a flanking adenine nucleotide at the 3-prime end of the canonical 6-nucleotide E-box sequence. CLOCK specifically binds to the half-site 5'-CAC-3', while BMAL1 binds to the half-site 5'-GTGA-3'. The CLOCK-BMAL1 heterodimer also recognizes the non-canonical E-box motifs 5'-AACGTGA-3' and 5'-CATGTGA-3'. CLOCK has an intrinsic acetyltransferase activity, which enables circadian chromatin remodeling by acetylating histones and nonhistone proteins, including its own partner BMAL1. Represses glucocorticoid receptor NR3C1/GR-induced transcriptional activity by reducing the association of NR3C1/GR to glucocorticoid response elements (GREs) via the acetylation of multiple lysine residues located in its hinge region. The acetyltransferase activity of CLOCK is as important as its transcription activity in circadian control. Acetylates metabolic enzymes IMPDH2 and NDUFA9 in a circadian manner. Facilitated by BMAL1, rhythmically interacts and acetylates argininosuccinate synthase 1 (ASS1) leading to enzymatic inhibition of ASS1 as well as the circadian oscillation of arginine biosynthesis and subsequent ureagenesis. Drives the circadian rhythm of blood pressure through transcriptional activation of ATP1B1. In Mus musculus (Mouse), this protein is Circadian locomoter output cycles protein kaput (Clock).